The following is a 690-amino-acid chain: Elongation factor G (690 aa).

Residues 8 to 283 (SKCRNIGIMA…AVVDYLPSPN (276 aa)) enclose the tr-type G domain. GTP is bound by residues 17-24 (AHIDAGKT), 81-85 (DTPGH), and 135-138 (NKMD).

This sequence belongs to the TRAFAC class translation factor GTPase superfamily. Classic translation factor GTPase family. EF-G/EF-2 subfamily.

It is found in the cytoplasm. Its function is as follows. Catalyzes the GTP-dependent ribosomal translocation step during translation elongation. During this step, the ribosome changes from the pre-translocational (PRE) to the post-translocational (POST) state as the newly formed A-site-bound peptidyl-tRNA and P-site-bound deacylated tRNA move to the P and E sites, respectively. Catalyzes the coordinated movement of the two tRNA molecules, the mRNA and conformational changes in the ribosome. The polypeptide is Elongation factor G (Anaplasma phagocytophilum (strain HZ)).